The following is a 292-amino-acid chain: AKT-interacting protein (292 aa).

Residues 1–11 (MNPFWSMSTSS) show a composition bias toward polar residues. The segment at 1 to 63 (MNPFWSMSTS…TSPAPAAQST (63 aa)) is disordered. Over residues 14-23 (KRSEGEEKTL) the composition is skewed to basic and acidic residues. A Phosphoserine modification is found at Ser-30. In terms of domain architecture, UBC core spans 74–222 (YLEYSLLAEF…VVDSVKVCTA (149 aa)).

It belongs to the ubiquitin-conjugating enzyme family. FTS subfamily. As to quaternary structure, component of the FTS/Hook/FHIP complex (FHF complex), composed of AKTIP/FTS, FHIP1B, and one or more members of the Hook family of proteins HOOK1, HOOK2, and HOOK3. Interacts directly with HOOK1, HOOK2 and HOOK3. The FHF complex associates with the homotypic vesicular sorting complex (the HOPS complex). Also interacts with AKT1. May interact with FHIP1A.

The protein localises to the cytoplasm. The protein resides in the cell membrane. Its function is as follows. Component of the FTS/Hook/FHIP complex (FHF complex). The FHF complex may function to promote vesicle trafficking and/or fusion via the homotypic vesicular protein sorting complex (the HOPS complex). Regulates apoptosis by enhancing phosphorylation and activation of AKT1. Increases release of TNFSF6 via the AKT1/GSK3B/NFATC1 signaling cascade. FHF complex promotes the distribution of AP-4 complex to the perinuclear area of the cell. In Homo sapiens (Human), this protein is AKT-interacting protein.